A 544-amino-acid chain; its full sequence is Chaperonin GroEL (544 aa).

ATP contacts are provided by residues 30–33 (TLGP), lysine 51, 87–91 (DGTTT), glycine 415, 479–481 (NAA), and aspartate 495.

Belongs to the chaperonin (HSP60) family. Forms a cylinder of 14 subunits composed of two heptameric rings stacked back-to-back. Interacts with the co-chaperonin GroES.

It is found in the cytoplasm. The catalysed reaction is ATP + H2O + a folded polypeptide = ADP + phosphate + an unfolded polypeptide.. In terms of biological role, together with its co-chaperonin GroES, plays an essential role in assisting protein folding. The GroEL-GroES system forms a nano-cage that allows encapsulation of the non-native substrate proteins and provides a physical environment optimized to promote and accelerate protein folding. The protein is Chaperonin GroEL of Acinetobacter baylyi (strain ATCC 33305 / BD413 / ADP1).